The primary structure comprises 1452 residues: CLIP-associating protein 1 (1452 aa).

HEAT repeat units lie at residues 68 to 87 (LLGMDILSALVTRLQDRFRS), 88 to 124 (QIGTVLPSLMDRLGDAKDSVREQDQNLLIKIMEQASN), and 163 to 200 (LTLSKIVPHICNLLGDPNSQVRDAAINCLVEIYRHVGE). Positions 239 to 299 (KNFDDEDSVD…GTAKEGAGGV (61 aa)) are disordered. Over residues 253–267 (SSASSSASSKAPQAA) the composition is skewed to low complexity. 2 HEAT repeats span residues 407 to 442 (HGAEAIMPTVFNLVPNSAKIMATSGVVAIRLIIRQT) and 443 to 479 (HVPRLIPIITSNCTSKSVAVRRRCYEFLDLLLQEWQT). 2 disordered regions span residues 545-735 (SDSI…GISQ) and 771-792 (YGMYSDDDANSDASSACSERSY). Residues 550-569 (SLPQSDRSSSSSQESLNRPL) are compositionally biased toward low complexity. Polar residues predominate over residues 573-597 (RSPTGSTVSRASTATSKSTPGSLQR). Composition is skewed to low complexity over residues 606–621 (AATCAKSKATSGASAA), 645–659 (QSSGSTTSTASTPAD), and 668–682 (VVSQSQPGSRSSSPG). The span at 715 to 724 (QGCSRETSPS) shows a compositional bias: polar residues. Low complexity predominate over residues 781–792 (SDASSACSERSY). Residues 926–963 (QQFNILMRFIVDQTQTPNLKVKVAILKYIESLARQMDP) form an HEAT 6 repeat. A disordered region spans residues 1033-1076 (LKNSSNSSMGSPSNTIGRTPSRHSSSRASPLTSPTNCSHGGLSP). The segment covering 1034-1046 (KNSSNSSMGSPSN) has biased composition (low complexity). Positions 1058-1070 (SRASPLTSPTNCS) are enriched in polar residues. HEAT repeat units follow at residues 1256–1293 (EHFKTILLLLLETLGDKDHAIRALALRVLREILRNQPA) and 1374–1411 (QILPDIIPGLLQGYDNTESSVRKASVFCLVAIYSVIGE).

The protein belongs to the CLASP family. In terms of assembly, interacts (via C-terminus) with clip1/clip-170, and cenpe.

It localises to the cytoplasm. It is found in the cytoskeleton. Its subcellular location is the microtubule organizing center. The protein resides in the centrosome. The protein localises to the chromosome. It localises to the centromere. It is found in the kinetochore. Its subcellular location is the spindle. The protein resides in the golgi apparatus. The protein localises to the trans-Golgi network. Its function is as follows. Microtubule plus-end tracking protein that promotes the stabilization of dynamic microtubules during anaphase. Plays a crucial role in chromatin-induced microtubule formation. May also act at microtubule minus ends. May be involved in the nucleation of noncentrosomal microtubules originating from the trans-Golgi network (TGN). The chain is CLIP-associating protein 1 from Xenopus tropicalis (Western clawed frog).